A 491-amino-acid polypeptide reads, in one-letter code: Serine/threonine-protein phosphatase 2A regulatory subunit B'' subunit delta (491 aa).

Residues 331-366 (TTPTSTEYWFRCMDLDGDGALSMFELEFFYEEQAQR) enclose the EF-hand domain. Ca(2+) contacts are provided by aspartate 344, aspartate 346, aspartate 348, and glutamate 355. Composition is skewed to acidic residues over residues 460-473 (AMAE…EGSD) and 481-491 (ADEDCDDLEPL). A disordered region spans residues 460-491 (AMAEDDDDHDEGSDPIDLYGLADEDCDDLEPL).

In terms of assembly, PP2A consists of a common heterodimeric core enzyme, composed of a 36 kDa catalytic subunit (subunit C) and a 65 kDa constant regulatory subunit (PR65 or subunit A), that associates with a variety of regulatory subunits. Proteins that associate with the core dimer include three families of regulatory subunits B (the R2/B/PR55/B55, R3/B''/PR72/PR130/PR59 and R5/B'/B56 families), the 48 kDa variable regulatory subunit, viral proteins, and cell signaling molecules. Expressed in testis, kidney, liver, lung, spleen, brain and heart.

Its function is as follows. The B regulatory subunit might modulate substrate selectivity and catalytic activity, and might also direct the localization of the catalytic enzyme to a particular subcellular compartment. Interacts with retinoblastoma-related protein p107 (in vivo). May target PP2A core dimer to p107 resulting in dephosphorylation of p107. This is Serine/threonine-protein phosphatase 2A regulatory subunit B'' subunit delta (Ppp2r3d) from Mus musculus (Mouse).